The chain runs to 120 residues: Small ribosomal subunit protein uS13 (120 aa).

Residues 93-120 are disordered; sequence RRGLPCRGQKTKTNARTRKGKRKTVGAA.

This sequence belongs to the universal ribosomal protein uS13 family. Part of the 30S ribosomal subunit. Forms a loose heterodimer with protein S19. Forms two bridges to the 50S subunit in the 70S ribosome.

Its function is as follows. Located at the top of the head of the 30S subunit, it contacts several helices of the 16S rRNA. In the 70S ribosome it contacts the 23S rRNA (bridge B1a) and protein L5 of the 50S subunit (bridge B1b), connecting the 2 subunits; these bridges are implicated in subunit movement. Contacts the tRNAs in the A and P-sites. The chain is Small ribosomal subunit protein uS13 from Sulfurimonas denitrificans (strain ATCC 33889 / DSM 1251) (Thiomicrospira denitrificans (strain ATCC 33889 / DSM 1251)).